The chain runs to 692 residues: Formate hydrogenlyase transcriptional activator (692 aa).

Positions 202–344 constitute a GAF domain; it reads DIDELVSEVA…QIAERVAIAV (143 aa). In terms of domain architecture, Sigma-54 factor interaction spans 381–610; sequence IIGRSEAMYN…LENVVERAVL (230 aa). Residues 409-416 and 472-481 contribute to the ATP site; these read GETGTGKE and ADKSSLFLDE. The H-T-H motif DNA-binding region spans 663–682; the sequence is PKGAAQRLGLKRTTLLSRMK.

Required for induction of expression of the formate dehydrogenase H and hydrogenase-3 structural genes. This chain is Formate hydrogenlyase transcriptional activator (fhlA), found in Salmonella typhimurium (strain SL1344).